A 237-amino-acid polypeptide reads, in one-letter code: MRIAVLSGAGISAESGVPTFRDDKNGLWARFDPYELSSTQGWRDNPQRVWGWYLWRHYLVADVAPNAGHRAIAAWQDHAEVSVITQNVDDLHERAGSRPVHHLHGSLFEFRCARCAKPYTGELPAMAEPALEVQPPVCGCGGLIRPDIVWFGEQLPDEPWRRAVEATESADVMVVVGTSAIVYPAAGLAELALSRGAAVVEVNPEVTPLSASATLSIRETASQALPGLLQRLPALLN.

One can recognise a Deacetylase sirtuin-type domain in the interval 1–235; the sequence is MRIAVLSGAG…PGLLQRLPAL (235 aa). NAD(+) is bound at residue 8 to 28; the sequence is GAGISAESGVPTFRDDKNGLW. Residues Y53 and R56 each coordinate substrate. 86-89 is a binding site for NAD(+); the sequence is QNVD. H104 serves as the catalytic Proton acceptor. Zn(2+) is bound by residues C112, C115, C138, and C140. NAD(+) is bound by residues 177–179, 203–205, and A221; these read GTS and NPE.

Belongs to the sirtuin family. Class III subfamily. Requires Zn(2+) as cofactor.

It localises to the cytoplasm. It catalyses the reaction N(6)-acetyl-L-lysyl-[protein] + NAD(+) + H2O = 2''-O-acetyl-ADP-D-ribose + nicotinamide + L-lysyl-[protein]. The enzyme catalyses N(6)-succinyl-L-lysyl-[protein] + NAD(+) + H2O = 2''-O-succinyl-ADP-D-ribose + nicotinamide + L-lysyl-[protein]. Its function is as follows. NAD-dependent lysine deacetylase and desuccinylase that specifically removes acetyl and succinyl groups on target proteins. Modulates the activities of several proteins which are inactive in their acylated form. In Mycolicibacterium paratuberculosis (strain ATCC BAA-968 / K-10) (Mycobacterium paratuberculosis), this protein is NAD-dependent protein deacylase.